A 585-amino-acid chain; its full sequence is Protein FAM151A (585 aa).

The chain crosses the membrane as a helical span at residues 14 to 34; sequence WVFASITCVSAVAIAAIVLAI.

It belongs to the menorin family.

The protein resides in the membrane. The chain is Protein FAM151A (FAM151A) from Pongo abelii (Sumatran orangutan).